The sequence spans 206 residues: Large ribosomal subunit protein uL4 (206 aa).

The disordered stretch occupies residues 51–76 (AKTRAEVSGGGIKPWRQKGTGRARQG).

Belongs to the universal ribosomal protein uL4 family. Part of the 50S ribosomal subunit.

Functionally, one of the primary rRNA binding proteins, this protein initially binds near the 5'-end of the 23S rRNA. It is important during the early stages of 50S assembly. It makes multiple contacts with different domains of the 23S rRNA in the assembled 50S subunit and ribosome. Its function is as follows. Forms part of the polypeptide exit tunnel. In Clostridium kluyveri (strain ATCC 8527 / DSM 555 / NBRC 12016 / NCIMB 10680 / K1), this protein is Large ribosomal subunit protein uL4.